Here is a 118-residue protein sequence, read N- to C-terminus: Holo-[acyl-carrier-protein] synthase (118 aa).

Residues Asp8 and Glu58 each coordinate Mg(2+).

Belongs to the P-Pant transferase superfamily. AcpS family. The cofactor is Mg(2+).

The protein localises to the cytoplasm. The enzyme catalyses apo-[ACP] + CoA = holo-[ACP] + adenosine 3',5'-bisphosphate + H(+). In terms of biological role, transfers the 4'-phosphopantetheine moiety from coenzyme A to a Ser of acyl-carrier-protein. The protein is Holo-[acyl-carrier-protein] synthase of Listeria welshimeri serovar 6b (strain ATCC 35897 / DSM 20650 / CCUG 15529 / CIP 8149 / NCTC 11857 / SLCC 5334 / V8).